We begin with the raw amino-acid sequence, 404 residues long: S-adenosylmethionine synthase (404 aa).

An ATP-binding site is contributed by 139 to 144 (GKGSTD).

It belongs to the AdoMet synthase 2 family. It depends on Mg(2+) as a cofactor.

The catalysed reaction is L-methionine + ATP + H2O = S-adenosyl-L-methionine + phosphate + diphosphate. It participates in amino-acid biosynthesis; S-adenosyl-L-methionine biosynthesis; S-adenosyl-L-methionine from L-methionine: step 1/1. Functionally, catalyzes the formation of S-adenosylmethionine from methionine and ATP. This is S-adenosylmethionine synthase from Saccharolobus islandicus (strain Y.N.15.51 / Yellowstone #2) (Sulfolobus islandicus).